The primary structure comprises 316 residues: Ribosomal RNA small subunit methyltransferase H (316 aa).

S-adenosyl-L-methionine is bound by residues 32–34 (AGH), D52, F79, D106, and Q113.

Belongs to the methyltransferase superfamily. RsmH family.

The protein localises to the cytoplasm. The enzyme catalyses cytidine(1402) in 16S rRNA + S-adenosyl-L-methionine = N(4)-methylcytidine(1402) in 16S rRNA + S-adenosyl-L-homocysteine + H(+). Its function is as follows. Specifically methylates the N4 position of cytidine in position 1402 (C1402) of 16S rRNA. The sequence is that of Ribosomal RNA small subunit methyltransferase H from Paenibacillus sp. (strain JDR-2).